The primary structure comprises 223 residues: Glycosylphosphatidylinositol anchor biosynthesis protein 11 (223 aa).

Transmembrane regions (helical) follow at residues 25–45, 52–72, 88–108, 120–140, 158–178, and 189–209; these read LAVVYGTLLLVYLRFIFSAGI, VMTQALPGLLLLHMGYCVVVL, MIAAALSVFFSVIIFGLLVLF, FVCAMHMSILAVLPLFFTYHL, VYAASVCTLIGAWLGAIPIPY, and ITILAGAYLGYFVGTLGGIAL.

It belongs to the PIGF family.

The protein localises to the endoplasmic reticulum membrane. The protein operates within glycolipid biosynthesis; glycosylphosphatidylinositol-anchor biosynthesis. Functionally, acts in the GPI biosynthetic pathway between GlcNAc-PI synthesis and GPI transfer to protein. This Yarrowia lipolytica (strain CLIB 122 / E 150) (Yeast) protein is Glycosylphosphatidylinositol anchor biosynthesis protein 11 (GPI11).